A 228-amino-acid polypeptide reads, in one-letter code: Cytochrome c oxidase subunit 2 (228 aa).

The Mitochondrial intermembrane segment spans residues 1–26 (MATWANLGLQDSSSPLMEQLNFFHDH). A helical transmembrane segment spans residues 27–47 (TLLILTMITILVGYIMGMLMF). Residues 48 to 60 (NQFTNRYLLHGQT) lie on the Mitochondrial matrix side of the membrane. A helical membrane pass occupies residues 61 to 81 (IEIIWTVLPAIILMFIALPSL). The Mitochondrial intermembrane portion of the chain corresponds to 82–228 (RLLYLMDEIN…FIKWITNMTN (147 aa)). Positions 161, 196, 198, 200, 204, and 207 each coordinate Cu cation. Glu-198 contributes to the Mg(2+) binding site.

It belongs to the cytochrome c oxidase subunit 2 family. Component of the cytochrome c oxidase (complex IV, CIV), a multisubunit enzyme composed of a catalytic core of 3 subunits and several supernumerary subunits. The complex exists as a monomer or a dimer and forms supercomplexes (SCs) in the inner mitochondrial membrane with ubiquinol-cytochrome c oxidoreductase (cytochrome b-c1 complex, complex III, CIII). It depends on Cu cation as a cofactor.

Its subcellular location is the mitochondrion inner membrane. The enzyme catalyses 4 Fe(II)-[cytochrome c] + O2 + 8 H(+)(in) = 4 Fe(III)-[cytochrome c] + 2 H2O + 4 H(+)(out). Component of the cytochrome c oxidase, the last enzyme in the mitochondrial electron transport chain which drives oxidative phosphorylation. The respiratory chain contains 3 multisubunit complexes succinate dehydrogenase (complex II, CII), ubiquinol-cytochrome c oxidoreductase (cytochrome b-c1 complex, complex III, CIII) and cytochrome c oxidase (complex IV, CIV), that cooperate to transfer electrons derived from NADH and succinate to molecular oxygen, creating an electrochemical gradient over the inner membrane that drives transmembrane transport and the ATP synthase. Cytochrome c oxidase is the component of the respiratory chain that catalyzes the reduction of oxygen to water. Electrons originating from reduced cytochrome c in the intermembrane space (IMS) are transferred via the dinuclear copper A center (CU(A)) of subunit 2 and heme A of subunit 1 to the active site in subunit 1, a binuclear center (BNC) formed by heme A3 and copper B (CU(B)). The BNC reduces molecular oxygen to 2 water molecules using 4 electrons from cytochrome c in the IMS and 4 protons from the mitochondrial matrix. The chain is Cytochrome c oxidase subunit 2 (COXII) from Anopheles quadrimaculatus (Common malaria mosquito).